The chain runs to 122 residues: Large ribosomal subunit protein uL14c (122 aa).

Belongs to the universal ribosomal protein uL14 family. As to quaternary structure, part of the 50S ribosomal subunit.

It localises to the plastid. The protein localises to the chloroplast. Its function is as follows. Binds to 23S rRNA. The protein is Large ribosomal subunit protein uL14c of Lepidium virginicum (Virginia pepperweed).